Reading from the N-terminus, the 148-residue chain is D-aminoacyl-tRNA deacylase (148 aa).

The short motif at 137 to 138 is the Gly-cisPro motif, important for rejection of L-amino acids element; sequence GP.

It belongs to the DTD family. In terms of assembly, homodimer.

The protein resides in the cytoplasm. The enzyme catalyses glycyl-tRNA(Ala) + H2O = tRNA(Ala) + glycine + H(+). It carries out the reaction a D-aminoacyl-tRNA + H2O = a tRNA + a D-alpha-amino acid + H(+). Its function is as follows. An aminoacyl-tRNA editing enzyme that deacylates mischarged D-aminoacyl-tRNAs. Also deacylates mischarged glycyl-tRNA(Ala), protecting cells against glycine mischarging by AlaRS. Acts via tRNA-based rather than protein-based catalysis; rejects L-amino acids rather than detecting D-amino acids in the active site. By recycling D-aminoacyl-tRNA to D-amino acids and free tRNA molecules, this enzyme counteracts the toxicity associated with the formation of D-aminoacyl-tRNA entities in vivo and helps enforce protein L-homochirality. The sequence is that of D-aminoacyl-tRNA deacylase from Enterococcus faecalis (strain ATCC 700802 / V583).